Reading from the N-terminus, the 1674-residue chain is Kinesin-like protein KIF21A (1674 aa).

N-acetylmethionine is present on Met1. The region spanning 9-371 (SVRVAVRIRP…LKYANRARNI (363 aa)) is the Kinesin motor domain. An ATP-binding site is contributed by 88 to 95 (GQTGAGKT). Positions 365 to 575 (ANRARNIKNK…NREERSVAGK (211 aa)) form a coiled coil. The residue at position 524 (Ser524) is a Phosphoserine. 3 disordered regions span residues 556–641 (KKRL…DEKA), 779–804 (EEQE…DQRK), and 841–881 (SDKV…AQQK). Positions 560–597 (QKLEESNREERSVAGKEDNTDTDQEKKEEKGVSERENN) are enriched in basic and acidic residues. The segment covering 598–637 (ELEVEESQEVSDHEDEEEEEEEEEDDIDGGESSDESDSES) has biased composition (acidic residues). Polar residues predominate over residues 851–865 (KLSSSDAPAQDTGSS). 2 coiled-coil regions span residues 931–1019 (TDII…AKEE) and 1053–1083 (LQAA…NQLL). Positions 1116–1138 (VEDSTDEDAPLNSPGSEGSTLSS) are disordered. Positions 1128-1138 (SPGSEGSTLSS) are enriched in polar residues. The tract at residues 1146–1167 (EVKPKNKARRRTTTQMELLYAD) is interaction with KANK1 and KANK2. 2 stretches are compositionally biased toward polar residues: residues 1170 to 1179 (ELASDTSTGD) and 1196 to 1205 (GMNTETSGTS). The disordered stretch occupies residues 1170–1318 (ELASDTSTGD…SSLSEVHRSS (149 aa)). A phosphoserine mark is found at Ser1212, Ser1225, Ser1229, and Ser1239. Basic and acidic residues predominate over residues 1245 to 1262 (KAYEKAEKSKAKEQKHSD). Positions 1288–1297 (NRLTVSQGNT) are enriched in polar residues. WD repeat units lie at residues 1345–1382 (GHTK…EIMS), 1385–1423 (GHPN…KCIR), 1449–1487 (SGEN…STGK), 1490–1532 (GHLG…LGTV), 1541–1578 (PHYD…LLQQ), 1582–1621 (AHKD…PVGE), and 1624–1661 (GHDS…DGQI). Ser1662 bears the Phosphoserine mark. Position 1664 is a phosphothreonine (Thr1664). The residue at position 1673 (Ser1673) is a Phosphoserine.

It belongs to the TRAFAC class myosin-kinesin ATPase superfamily. Kinesin family. Part of a cortical microtubule stabilization complex (CMSC) composed of KANK1, PPFIA1, PPFIBP1, ERC1/ELKS, PHLDB2/LL5beta, CLASPs, KIF21A and possibly additional interactors; within CMSCs KANK1 and PHLDB2/LL5beta seem to be the core components for recruiting microtubule-binding proteins KIF21A and CLASPs, whereas PPFIA1, PPFIBP1 and ERC1/ELKS serve as scaffolds for protein clustering. Interacts (via residues 1146-1167) with KANK1 (via ankyrin repeats 1-5) and KANK2 (via ankyrin repeats 1-5).

The protein localises to the cytoplasm. The protein resides in the cytoskeleton. It localises to the cell cortex. It is found in the cell projection. Its subcellular location is the axon. The protein localises to the dendrite. The protein resides in the growth cone. Processive microtubule plus-end directed motor protein involved in neuronal axon guidance. Is recruited by KANK1 to cortical microtubule stabilizing complexes (CMSCs) at focal adhesions (FAs) rims where it promotes microtubule capture and stability. Controls microtubule polymerization rate at axonal growth cones and suppresses microtubule growth without inducing microtubule disassembly once it reaches the cell cortex. This Homo sapiens (Human) protein is Kinesin-like protein KIF21A (KIF21A).